A 304-amino-acid chain; its full sequence is N-acetylmuramic acid 6-phosphate etherase (304 aa).

The SIS domain occupies 60–221; it reads GVSVLRHGGR…STAVMVRLGY (162 aa). Catalysis depends on E88, which acts as the Proton donor. E119 is an active-site residue.

The protein belongs to the GCKR-like family. MurNAc-6-P etherase subfamily. In terms of assembly, homodimer.

The enzyme catalyses N-acetyl-D-muramate 6-phosphate + H2O = N-acetyl-D-glucosamine 6-phosphate + (R)-lactate. The protein operates within amino-sugar metabolism; N-acetylmuramate degradation. Specifically catalyzes the cleavage of the D-lactyl ether substituent of MurNAc 6-phosphate, producing GlcNAc 6-phosphate and D-lactate. The sequence is that of N-acetylmuramic acid 6-phosphate etherase from Thermobifida fusca (strain YX).